The chain runs to 169 residues: Shikimate kinase (169 aa).

12–17 provides a ligand contact to ATP; that stretch reads AVGKTT. A Mg(2+)-binding site is contributed by Thr-16. Substrate-binding residues include Asp-34, Arg-58, and Gly-80. Arg-119 serves as a coordination point for ATP. Arg-139 provides a ligand contact to substrate. ATP is bound at residue Arg-156.

The protein belongs to the shikimate kinase family. As to quaternary structure, monomer. Mg(2+) serves as cofactor.

Its subcellular location is the cytoplasm. The enzyme catalyses shikimate + ATP = 3-phosphoshikimate + ADP + H(+). It participates in metabolic intermediate biosynthesis; chorismate biosynthesis; chorismate from D-erythrose 4-phosphate and phosphoenolpyruvate: step 5/7. Its function is as follows. Catalyzes the specific phosphorylation of the 3-hydroxyl group of shikimic acid using ATP as a cosubstrate. In Alkaliphilus oremlandii (strain OhILAs) (Clostridium oremlandii (strain OhILAs)), this protein is Shikimate kinase.